Reading from the N-terminus, the 664-residue chain is DNA ligase (664 aa).

NAD(+) is bound by residues 31-35 (DYEFD), 80-81 (SL), and glutamate 110. Catalysis depends on lysine 112, which acts as the N6-AMP-lysine intermediate. 2 residues coordinate NAD(+): arginine 133 and glutamate 169. In terms of domain architecture, BRCT 1 spans 237–257 (LEKARKWGFKVPAESELKDSI). The NAD(+) site is built by lysine 284 and lysine 308. Zn(2+)-binding residues include cysteine 402, cysteine 405, cysteine 420, and cysteine 426. Residues 586–664 (NQTNILEGNT…SEEDFLKMLE (79 aa)) form the BRCT 2 domain.

It belongs to the NAD-dependent DNA ligase family. LigA subfamily. Mg(2+) serves as cofactor. Mn(2+) is required as a cofactor.

It catalyses the reaction NAD(+) + (deoxyribonucleotide)n-3'-hydroxyl + 5'-phospho-(deoxyribonucleotide)m = (deoxyribonucleotide)n+m + AMP + beta-nicotinamide D-nucleotide.. Its function is as follows. DNA ligase that catalyzes the formation of phosphodiester linkages between 5'-phosphoryl and 3'-hydroxyl groups in double-stranded DNA using NAD as a coenzyme and as the energy source for the reaction. It is essential for DNA replication and repair of damaged DNA. This Christiangramia forsetii (strain DSM 17595 / CGMCC 1.15422 / KT0803) (Gramella forsetii) protein is DNA ligase.